A 216-amino-acid chain; its full sequence is 3-isopropylmalate dehydratase small subunit (216 aa).

It belongs to the LeuD family. LeuD type 1 subfamily. Heterodimer of LeuC and LeuD.

The catalysed reaction is (2R,3S)-3-isopropylmalate = (2S)-2-isopropylmalate. The protein operates within amino-acid biosynthesis; L-leucine biosynthesis; L-leucine from 3-methyl-2-oxobutanoate: step 2/4. Its function is as follows. Catalyzes the isomerization between 2-isopropylmalate and 3-isopropylmalate, via the formation of 2-isopropylmaleate. This is 3-isopropylmalate dehydratase small subunit from Acidovorax ebreus (strain TPSY) (Diaphorobacter sp. (strain TPSY)).